The sequence spans 401 residues: Probable tRNA sulfurtransferase (401 aa).

In terms of domain architecture, THUMP spans 60–165 (EPIIDKLKNV…QEGTYITCHD (106 aa)). Residues 183-184 (ML), 208-209 (HF), Arg-265, Gly-287, and Gln-296 contribute to the ATP site.

This sequence belongs to the ThiI family.

It is found in the cytoplasm. It catalyses the reaction [ThiI sulfur-carrier protein]-S-sulfanyl-L-cysteine + a uridine in tRNA + 2 reduced [2Fe-2S]-[ferredoxin] + ATP + H(+) = [ThiI sulfur-carrier protein]-L-cysteine + a 4-thiouridine in tRNA + 2 oxidized [2Fe-2S]-[ferredoxin] + AMP + diphosphate. The catalysed reaction is [ThiS sulfur-carrier protein]-C-terminal Gly-Gly-AMP + S-sulfanyl-L-cysteinyl-[cysteine desulfurase] + AH2 = [ThiS sulfur-carrier protein]-C-terminal-Gly-aminoethanethioate + L-cysteinyl-[cysteine desulfurase] + A + AMP + 2 H(+). It functions in the pathway cofactor biosynthesis; thiamine diphosphate biosynthesis. Catalyzes the ATP-dependent transfer of a sulfur to tRNA to produce 4-thiouridine in position 8 of tRNAs, which functions as a near-UV photosensor. Also catalyzes the transfer of sulfur to the sulfur carrier protein ThiS, forming ThiS-thiocarboxylate. This is a step in the synthesis of thiazole, in the thiamine biosynthesis pathway. The sulfur is donated as persulfide by IscS. The polypeptide is Probable tRNA sulfurtransferase (Geobacillus sp. (strain WCH70)).